The primary structure comprises 594 residues: Dictomallein-4 (594 aa).

A signal peptide spans 1 to 18 (MKLVLIFLIINFLLIINC). Positions 147–408 (PDVSQDYTLK…QNYFKNSIYY (262 aa)) constitute a Peptidase M66 domain. H300 lines the Zn(2+) pocket. Residue E301 is part of the active site. Zn(2+) contacts are provided by H304 and H310.

Belongs to the dictomallein family. The cofactor is Zn(2+).

It is found in the secreted. The chain is Dictomallein-4 (dtmlD) from Dictyostelium discoideum (Social amoeba).